A 339-amino-acid polypeptide reads, in one-letter code: Protein LicA (339 aa).

9 consecutive repeat copies span residues 4-7 (INQS), 8-11 (INQS), 12-15 (INQS), 16-19 (INQS), 20-23 (INQS), 24-27 (INQS), 28-31 (INQS), 32-35 (INQS), and 36-39 (INQS). A 9 X 4 AA tandem repeats of I-N-Q-S region spans residues 4–39 (INQSINQSINQSINQSINQSINQSINQSINQSINQS).

Belongs to the peptidase S49 family.

Functionally, mediates phase variation of the LOS 6A2 and 12D9 epitopes. Phase variation of H.influenza LOS epitopes expressed by LicA is determined by a translational switch. This chain is Protein LicA (licA), found in Haemophilus influenzae.